The primary structure comprises 2152 residues: Oxygen-regulated protein 1 (2152 aa).

A compositionally biased stretch (polar residues) spans 1 to 19; sequence MSDTPSTGFSIIHPTSSED. Residues 1–25 form a disordered region; sequence MSDTPSTGFSIIHPTSSEDQVPPPR. Doublecortin domains follow at residues 36 to 118 and 154 to 233; these read KRIS…VDLD and RSLV…GNYD. 3 disordered regions span residues 353–375, 1435–1455, and 1587–1616; these read VSKTGPSNNDEKSEMSFPGRTES, DMEEPRTSEEPGSITNSMTSS, and DWSDYRPDSDSEQPYKTSSDDPNDSGELAQ.

Interacts (via the doublecortin domains) with microtubules. Interacts with RP1L1. Interacts with MAK.

Its subcellular location is the cytoplasm. It is found in the cytoskeleton. The protein resides in the cilium axoneme. The protein localises to the cell projection. It localises to the cilium. Its subcellular location is the photoreceptor outer segment. In terms of biological role, microtubule-associated protein regulating the stability and length of the microtubule-based axoneme of photoreceptors. Required for the differentiation of photoreceptor cells, it plays a role in the organization of the outer segment of rod and cone photoreceptors ensuring the correct orientation and higher-order stacking of outer segment disks along the photoreceptor axoneme. The chain is Oxygen-regulated protein 1 (RP1) from Papio hamadryas (Hamadryas baboon).